The sequence spans 187 residues: Aminodeoxychorismate synthase component 2 (187 aa).

One can recognise a Glutamine amidotransferase type-1 domain in the interval 1–187; it reads MILLIDNYDS…HQLLANFLNR (187 aa). Residues Cys-79, His-168, and Glu-170 contribute to the active site.

As to quaternary structure, monomer. Heterodimer consisting of two non-identical subunits: a glutamine amidotransferase subunit (PabA) and a aminodeoxychorismate synthase subunit (PabB).

The catalysed reaction is chorismate + L-glutamine = 4-amino-4-deoxychorismate + L-glutamate. The protein operates within cofactor biosynthesis; tetrahydrofolate biosynthesis; 4-aminobenzoate from chorismate: step 1/2. Functionally, part of a heterodimeric complex that catalyzes the two-step biosynthesis of 4-amino-4-deoxychorismate (ADC), a precursor of p-aminobenzoate (PABA) and tetrahydrofolate. In the first step, a glutamine amidotransferase (PabA) generates ammonia as a substrate that, along with chorismate, is used in the second step, catalyzed by aminodeoxychorismate synthase (PabB) to produce ADC. PabA converts glutamine into glutamate only in the presence of stoichiometric amounts of PabB. This is Aminodeoxychorismate synthase component 2 (pabA) from Klebsiella aerogenes (Enterobacter aerogenes).